The following is a 147-amino-acid chain: Hemoglobin subunit beta (147 aa).

N-acetylvaline is present on valine 2. Residues 3–147 (HMSAEEKGIV…VAAALAHKYH (145 aa)) enclose the Globin domain. Phosphothreonine is present on threonine 13. At serine 45 the chain carries Phosphoserine. Lysine 60 bears the N6-acetyllysine mark. Histidine 64 serves as a coordination point for heme b. Position 83 is an N6-acetyllysine (lysine 83). A heme b-binding site is contributed by histidine 93. Position 94 is an S-nitrosocysteine (cysteine 94). Residue lysine 145 is modified to N6-acetyllysine.

Belongs to the globin family. Heterotetramer of two alpha chains and two beta chains. In terms of tissue distribution, red blood cells.

In terms of biological role, involved in oxygen transport from the lung to the various peripheral tissues. This chain is Hemoglobin subunit beta (HBB), found in Scalopus aquaticus (Eastern mole).